The sequence spans 408 residues: Aminoacylase-1 (408 aa).

Residue histidine 80 participates in Zn(2+) binding. Aspartate 82 is an active-site residue. Aspartate 113 is a Zn(2+) binding site. The Proton acceptor role is filled by glutamate 147. Positions 148, 175, and 373 each coordinate Zn(2+).

The protein belongs to the peptidase M20A family. As to quaternary structure, homodimer. Interacts with SPHK1. Zn(2+) is required as a cofactor. In terms of tissue distribution, expression is highest in kidney, strong in brain and weaker in placenta and spleen.

It localises to the cytoplasm. The enzyme catalyses an N-acyl-L-amino acid + H2O = an L-alpha-amino acid + a carboxylate. The catalysed reaction is N-acetyl-L-methionine + H2O = L-methionine + acetate. It catalyses the reaction N-acetyl-L-glutamine + H2O = L-glutamine + acetate. Functionally, catalyzes the hydrolysis of N-acetylated amino acids to acetate and free amino acids. This Homo sapiens (Human) protein is Aminoacylase-1 (ACY1).